The primary structure comprises 236 residues: Dense granule protein 7 (236 aa).

Positions 1–26 are cleaved as a signal peptide; that stretch reads MARHAIFSALCVLGLVAAALPQFATA. The segment at 45–106 is disordered; it reads DGQAPVDSLR…EVHFRKRGVR (62 aa). Residues 70–80 show a composition bias toward polar residues; sequence TTSMDKASVES. The required for dimerization, interactions with liposomes and liposome tubulation stretch occupies residues 147-236; the sequence is AVGMGASYFA…SGEDGEDARQ (90 aa). A helical membrane pass occupies residues 181-201; it reads VGTVLGFAALAAAAAFLGMGL. The disordered stretch occupies residues 208–236; sequence FSPRKNRSRQPALEQEVPESGEDGEDARQ. The N-linked (GlcNAc...) asparagine glycan is linked to Asn-213. Residues 223 to 236 are compositionally biased toward acidic residues; sequence EVPESGEDGEDARQ.

It belongs to the Gra7 family. In terms of assembly, homodimer. Can form higher order homooligomers in a lipid-stimulated manner. Component of a complex at least composed of ROP18, GRA7 and ROP2. Interacts with ROP5. Interacts with ROP18 in the absence of ROP5. Interacts with mouse IRGA6/IIGP1 in GTP-dependent manner; the interaction results in faster turnover of the GTP-activated IRGA6/IIGP1 oligomer. Interacts with mouse TRAF6 (via N-terminal RING domain); the interaction plays a role in GRA7-induced pro-inflammatory cytokine production in mouse macrophages.

The protein resides in the secreted. It is found in the parasitophorous vacuole lumen. It localises to the parasitophorous vacuole membrane. The protein localises to the cytoplasm. Its subcellular location is the host cytoplasm. The protein resides in the cytoplasmic vesicle. It is found in the secretory vesicle. Functionally, binds lipid bilayers, sequesters host endocytic organelles in the parasitophorous vacuole space, and causes their deformation and remodeling. Plays a role in nutrient acquisition from the host. In complex with ROP18, targets immunity-related GTPases (IRGs) to prevent IRG-mediated parasite killing by mouse cells. Important component within a kinase complex, contributing to phosphorylation of mouse IRGA6/IIGP1, an immunity-related GTPase that protects mice from infection by certain intracellular pathogens, by Toxoplasma gondii ROP5 and ROP18. Induces pro-inflammatory cytokine production in host macrophages. Activates host pro-inflammatory signaling pathways in a MyD88-dependent manner. Triggers generation of reactive oxygen species (ROS) in host cells. Activates MAPK pathway in host cells. Activates host NF-kappa-B signaling pathway by interacting with TRAF6 and modulating the 'Lys-63'-linked polyubiquitination of TRAF6. The polypeptide is Dense granule protein 7 (Toxoplasma gondii).